The following is a 402-amino-acid chain: Imidazolonepropionase (402 aa).

2 residues coordinate Fe(3+): H66 and H68. The Zn(2+) site is built by H66 and H68. 4-imidazolone-5-propanoate is bound by residues R75, Y138, and H171. N-formimidoyl-L-glutamate is bound at residue Y138. Fe(3+) is bound at residue H236. H236 contacts Zn(2+). Residue Q239 participates in 4-imidazolone-5-propanoate binding. D311 is a binding site for Fe(3+). Position 311 (D311) interacts with Zn(2+). N313 and G315 together coordinate N-formimidoyl-L-glutamate. Residue T316 participates in 4-imidazolone-5-propanoate binding.

Belongs to the metallo-dependent hydrolases superfamily. HutI family. The cofactor is Zn(2+). Fe(3+) serves as cofactor.

It localises to the cytoplasm. It carries out the reaction 4-imidazolone-5-propanoate + H2O = N-formimidoyl-L-glutamate. Its pathway is amino-acid degradation; L-histidine degradation into L-glutamate; N-formimidoyl-L-glutamate from L-histidine: step 3/3. Its function is as follows. Catalyzes the hydrolytic cleavage of the carbon-nitrogen bond in imidazolone-5-propanoate to yield N-formimidoyl-L-glutamate. It is the third step in the universal histidine degradation pathway. This Pseudomonas aeruginosa (strain UCBPP-PA14) protein is Imidazolonepropionase.